We begin with the raw amino-acid sequence, 335 residues long: Pregnancy-specific beta-1-glycoprotein 11 (335 aa).

An N-terminal signal peptide occupies residues 1 to 34; that stretch reads MGPLSAPPCTEHIKWKGLLLTALLLNFWNLPTTA. The 110-residue stretch at 35–144 folds into the Ig-like V-type domain; that stretch reads QVMIEAQPPK…TGYFTFTLYL (110 aa). N-linked (GlcNAc...) asparagine glycosylation is found at Asn61, Asn104, and Asn111. The Cell attachment site signature appears at 127–129; sequence RGD. Ig-like C2-type domains are found at residues 147–234 and 242–317; these read PKPS…VTLN and PRIF…TSLT. 2 cysteine pairs are disulfide-bonded: Cys169/Cys217 and Cys261/Cys301.

The protein belongs to the immunoglobulin superfamily. CEA family.

The protein resides in the secreted. In Homo sapiens (Human), this protein is Pregnancy-specific beta-1-glycoprotein 11 (PSG11).